The primary structure comprises 583 residues: Ankyrin repeat-containing protein NPR4 (583 aa).

ANK repeat units follow at residues 68 to 97 (HNDTDLHVAARGGDAGALRRALDEAAAAVA), 119 to 148 (AGETPLVAAAERGHLEVVRELLRHLDAEGV), 154 to 183 (SGYDALHVAAREGRHAVVQEMLLHNRLLAK), 188 to 218 (ANTSPLISAATRGHTEVVKLLLELDDFGLVE), 223 to 252 (NGKNSLHFAARQGHVEIVKALLEKDPQLAR), 257 to 286 (KGQTALHMAVKGTNCDVLRALVDADPAIVM), and 291 to 321 (NGNTALHVATRKKRAEIVAVLLRLPDTHVNA). A run of 4 helical transmembrane segments spans residues 414–434 (VTVVAVLFATVAFAAIFTVPG), 452–472 (IFFIFNAIALFTSLAVVVVQI), 492–512 (LMWLASVCTTISFIASCYIVL), and 518–538 (WAALLVSLIGGITMAGVLGTM).

It localises to the cell membrane. In terms of biological role, involved in salt stress tolerance. The sequence is that of Ankyrin repeat-containing protein NPR4 from Oryza sativa subsp. japonica (Rice).